A 471-amino-acid chain; its full sequence is Probable lysophospholipase BODYGUARD 2 (471 aa).

The N-terminal stretch at 1–45 is a signal peptide; sequence MGIARWLNRTVGFFVFALLDIADFLLCYTYKTLDYFLESERKPCY. Cysteine 46 carries N-palmitoyl cysteine lipidation. The 104-residue stretch at 193 to 296 folds into the AB hydrolase-1 domain; that stretch reads VVFIHGFVSS…AIKSLTLLAP (104 aa). Histidine 197 is a catalytic residue. Serine 271 acts as the Nucleophile in catalysis. Residues aspartate 418 and histidine 446 each act as charge relay system in the active site.

Its subcellular location is the cell membrane. The protein localises to the secreted. It is found in the cell wall. Its function is as follows. Involved in cuticle development and morphogenesis. The sequence is that of Probable lysophospholipase BODYGUARD 2 from Arabidopsis thaliana (Mouse-ear cress).